The primary structure comprises 710 residues: Fatty acid oxidation complex subunit alpha (710 aa).

Residues 1–190 (MSMEKTFNLA…KMGLVNDVVP (190 aa)) are enoyl-CoA hydratase. Residues 310 to 710 (RKVKKVMVLG…ASDGSQFYKK (401 aa)) are 3-hydroxyacyl-CoA dehydrogenase.

This sequence in the N-terminal section; belongs to the enoyl-CoA hydratase/isomerase family. In the central section; belongs to the 3-hydroxyacyl-CoA dehydrogenase family. Heterotetramer of two alpha chains (FadJ) and two beta chains (FadI).

Its subcellular location is the cytoplasm. It carries out the reaction a (3S)-3-hydroxyacyl-CoA = a (2E)-enoyl-CoA + H2O. It catalyses the reaction a 4-saturated-(3S)-3-hydroxyacyl-CoA = a (3E)-enoyl-CoA + H2O. The catalysed reaction is a (3S)-3-hydroxyacyl-CoA + NAD(+) = a 3-oxoacyl-CoA + NADH + H(+). The enzyme catalyses (3S)-3-hydroxybutanoyl-CoA = (3R)-3-hydroxybutanoyl-CoA. Its pathway is lipid metabolism; fatty acid beta-oxidation. Catalyzes the formation of a hydroxyacyl-CoA by addition of water on enoyl-CoA. Also exhibits 3-hydroxyacyl-CoA epimerase and 3-hydroxyacyl-CoA dehydrogenase activities. The sequence is that of Fatty acid oxidation complex subunit alpha from Shewanella frigidimarina (strain NCIMB 400).